The sequence spans 67 residues: Conotoxin TxMMSK-01 (67 aa).

The first 20 residues, 1-20, serve as a signal peptide directing secretion; sequence MMSKLGVLLITCLLLFPLTA. The propeptide occupies 21–53; that stretch reads VPLDGDQPADQPAERLQDDISSENHPFFDPVKR. Intrachain disulfides connect Cys54/Cys66, Cys55/Cys62, and Cys59/Cys65. Pro64 is modified (4-hydroxyproline). Cys66 is modified (cysteine amide).

The protein belongs to the conotoxin M superfamily. As to expression, expressed by the venom duct.

Its subcellular location is the secreted. The sequence is that of Conotoxin TxMMSK-01 from Conus textile (Cloth-of-gold cone).